The chain runs to 253 residues: 5'/3'-nucleotidase SurE (253 aa).

The a divalent metal cation site is built by aspartate 8, aspartate 9, serine 39, and asparagine 92.

Belongs to the SurE nucleotidase family. The cofactor is a divalent metal cation.

It localises to the cytoplasm. The enzyme catalyses a ribonucleoside 5'-phosphate + H2O = a ribonucleoside + phosphate. It catalyses the reaction a ribonucleoside 3'-phosphate + H2O = a ribonucleoside + phosphate. The catalysed reaction is [phosphate](n) + H2O = [phosphate](n-1) + phosphate + H(+). Its function is as follows. Nucleotidase with a broad substrate specificity as it can dephosphorylate various ribo- and deoxyribonucleoside 5'-monophosphates and ribonucleoside 3'-monophosphates with highest affinity to 3'-AMP. Also hydrolyzes polyphosphate (exopolyphosphatase activity) with the preference for short-chain-length substrates (P20-25). Might be involved in the regulation of dNTP and NTP pools, and in the turnover of 3'-mononucleotides produced by numerous intracellular RNases (T1, T2, and F) during the degradation of various RNAs. The sequence is that of 5'/3'-nucleotidase SurE from Enterobacter sp. (strain 638).